Reading from the N-terminus, the 123-residue chain is Putative iron-sulfur cluster insertion protein ErpA (123 aa).

Iron-sulfur cluster is bound by residues Cys-51, Cys-115, and Cys-117.

Belongs to the HesB/IscA family. As to quaternary structure, homodimer. Requires iron-sulfur cluster as cofactor.

Required for insertion of 4Fe-4S clusters. The protein is Putative iron-sulfur cluster insertion protein ErpA of Burkholderia cenocepacia (strain HI2424).